The following is a 511-amino-acid chain: LEM domain-containing protein 2 (511 aa).

Residue Ala-2 is modified to N-acetylalanine. The LEM domain maps to 2–42 (AGLSDLELRRELQALGFQPGPITDTTRNVYRNKLRRLRGEA). Disordered stretches follow at residues 18–110 (FQPG…SDAS) and 128–206 (GLSY…AGRT). The span at 38–80 (LRGEARLRDDERLREDAGPREDAGPRGPERQREEARLREEAPL) shows a compositional bias: basic and acidic residues. Residues 80-112 (LRARPAASVLRSEPWPLSPSPPAPSAASDASGP) are interaction with lamin A/C complexes. Residues 80–141 (LRARPAASVL…PPHAGPGPLR (62 aa)) are required for nuclear retention and interaction with LMNA isoform C. Low complexity-rich tracts occupy residues 81-94 (RARPAASVLRSEPW) and 172-183 (APPSASARPHSA). The next 2 membrane-spanning stretches (helical) occupy residues 221-241 (LLLWASLGLLLGFLAILWVKM) and 385-405 (VTHVLIFFWCLAFLWGLLILL). The winged-Helix (WH) stretch occupies residues 403–511 (ILLKYRWRKL…KPSSFSDSER (109 aa)). A phosphoserine mark is found at Ser-505, Ser-507, and Ser-509.

As to quaternary structure, interacts (via N-terminus) with LMNA isoform C (via C-terminus) (in vitro). Interacts (via LEM domain) with BANF1. Interacts (via C-terminus) with CHMP7. Interacts (via N-terminus) with tubulin; the interaction causes microtubule bundling and stabilization (in vitro). Post-translationally, phosphorylated; strongly phosphorylated in mitosis compared to G1/S. Ubiquitously expressed, including liver, brain, heart, skeletal muscle, lung, testis, spleen, kidney and white adipose tissue.

It is found in the nucleus inner membrane. The protein resides in the nucleus envelope. It localises to the cytoplasm. The protein localises to the cytoskeleton. Its subcellular location is the spindle. Functionally, nuclear lamina-associated inner nuclear membrane protein that is involved in nuclear structure organization and maintenance of nuclear envelope (NE) integrity and NE reformation after mitosis. Plays a role as transmembrane adapter for the endosomal sorting complexes required for transport (ESCRT), and is thereby involved in ESCRT-mediated NE reformation. Promotes ESCRT-mediated NE closure by recruiting CHMP7 and downstream ESCRT-III proteins IST1/CHMP8 and CHMP2A to the reforming NE during anaphase. During nuclear reassembly, condenses into a liquid-like coating around microtubule spindles and coassembles with CHMP7 to form a macromolecular O-ring seal at the confluence between membranes, chromatin, and the spindle to facilitate early nuclear sealing. Plays a role in the organization of heterochromatin associated with the NE and in the maintenance of NE organization under mechanical stress. Required for embryonic development and is involved in regulation of several signaling pathways such as MAPK and AKT. Required for myoblast differentiation involving regulation of ERK signaling. Essential for cardiac homeostasis and proper heart function. The chain is LEM domain-containing protein 2 (Lemd2) from Mus musculus (Mouse).